A 314-amino-acid polypeptide reads, in one-letter code: Lipid A biosynthesis acyltransferase 2 (314 aa).

Residues 17-37 (LSPVYWFTWFVLGMIAGISMF) form a helical membrane-spanning segment. An HXXXXD motif motif is present at residues 137 to 142 (HGWSVD).

Belongs to the LpxL/LpxM/LpxP family. LpxM subfamily.

It localises to the cell inner membrane. It carries out the reaction an alpha-Kdo-(2-&gt;4)-alpha-Kdo-(2-&gt;6)-(acyl)-lipid IVA + a fatty acyl-[ACP] = an alpha-Kdo-(2-&gt;4)-alpha-Kdo-(2-&gt;6)-lipid A + holo-[ACP]. It participates in glycolipid biosynthesis; KDO(2)-lipid A biosynthesis; KDO(2)-lipid A from CMP-3-deoxy-D-manno-octulosonate and lipid IV(A): step 4/4. The protein operates within bacterial outer membrane biogenesis; lipopolysaccharide biosynthesis. Its function is as follows. Catalyzes the transfer of an acyl chain from an acyl-[acyl-carrier-protein] (ACP) to a Kdo(2)-(acyl)-lipid IV(A) to form a Kdo(2)-lipid A. This chain is Lipid A biosynthesis acyltransferase 2, found in Shigella flexneri.